The following is a 36-amino-acid chain: Photosystem I reaction center subunit VIII (36 aa).

The chain crosses the membrane as a helical span at residues 9 to 29 (ILVPLVGLIFPALSMALLFIY).

Belongs to the PsaI family.

The protein resides in the plastid. It localises to the chloroplast thylakoid membrane. Functionally, may help in the organization of the PsaL subunit. The sequence is that of Photosystem I reaction center subunit VIII from Pyropia yezoensis (Susabi-nori).